The primary structure comprises 162 residues: Ribose-5-phosphate isomerase B (162 aa).

D-ribulose 5-phosphate contacts are provided by residues 11 to 12 and 70 to 74; these read DH and GSGNG. Residue E75 is the Proton acceptor of the active site. H102 (proton donor) is an active-site residue. N103, R113, R137, and R141 together coordinate D-ribulose 5-phosphate.

The protein belongs to the LacAB/RpiB family. Homodimer.

The enzyme catalyses aldehydo-D-ribose 5-phosphate = D-ribulose 5-phosphate. Its pathway is carbohydrate degradation; pentose phosphate pathway; D-ribose 5-phosphate from D-ribulose 5-phosphate (non-oxidative stage): step 1/1. Its function is as follows. Catalyzes the interconversion of ribulose-5-P and ribose-5-P. The sequence is that of Ribose-5-phosphate isomerase B from Mycobacterium leprae (strain TN).